Here is a 271-residue protein sequence, read N- to C-terminus: tRNA pseudouridine synthase A (271 aa).

D54 acts as the Nucleophile in catalysis. Residue Y112 coordinates substrate.

This sequence belongs to the tRNA pseudouridine synthase TruA family. In terms of assembly, homodimer.

It catalyses the reaction uridine(38/39/40) in tRNA = pseudouridine(38/39/40) in tRNA. Its function is as follows. Formation of pseudouridine at positions 38, 39 and 40 in the anticodon stem and loop of transfer RNAs. The protein is tRNA pseudouridine synthase A of Acinetobacter baylyi (strain ATCC 33305 / BD413 / ADP1).